Here is a 108-residue protein sequence, read N- to C-terminus: UPF0060 membrane protein CC_1976 (108 aa).

The next 4 helical transmembrane spans lie at 4–24, 27–47, 59–79, and 85–105; these read FAIY…FWAW, LGKS…FALL, AFAA…QVVE, and RWDL…LFGP.

This sequence belongs to the UPF0060 family.

The protein resides in the cell inner membrane. The protein is UPF0060 membrane protein CC_1976 of Caulobacter vibrioides (strain ATCC 19089 / CIP 103742 / CB 15) (Caulobacter crescentus).